The primary structure comprises 456 residues: Argininosuccinate lyase (456 aa).

This sequence belongs to the lyase 1 family. Argininosuccinate lyase subfamily.

The protein localises to the cytoplasm. It carries out the reaction 2-(N(omega)-L-arginino)succinate = fumarate + L-arginine. Its pathway is amino-acid biosynthesis; L-arginine biosynthesis; L-arginine from L-ornithine and carbamoyl phosphate: step 3/3. In Listeria monocytogenes serotype 4b (strain F2365), this protein is Argininosuccinate lyase.